A 206-amino-acid polypeptide reads, in one-letter code: LexA repressor (206 aa).

Positions 28-48 (VREICAAVGLSSTSTVHGHLT) form a DNA-binding region, H-T-H motif. Catalysis depends on for autocatalytic cleavage activity residues Ser127 and Lys165.

The protein belongs to the peptidase S24 family. As to quaternary structure, homodimer.

The catalysed reaction is Hydrolysis of Ala-|-Gly bond in repressor LexA.. Represses a number of genes involved in the response to DNA damage (SOS response), including recA and lexA. In the presence of single-stranded DNA, RecA interacts with LexA causing an autocatalytic cleavage which disrupts the DNA-binding part of LexA, leading to derepression of the SOS regulon and eventually DNA repair. The protein is LexA repressor of Lactobacillus delbrueckii subsp. bulgaricus (strain ATCC 11842 / DSM 20081 / BCRC 10696 / JCM 1002 / NBRC 13953 / NCIMB 11778 / NCTC 12712 / WDCM 00102 / Lb 14).